The primary structure comprises 209 residues: NADH-ubiquinone oxidoreductase subunit 9 (209 aa).

Belongs to the complex I 30 kDa subunit family. As to quaternary structure, complex I is composed of about 30 different subunits.

It localises to the mitochondrion inner membrane. The catalysed reaction is a ubiquinone + NADH + 5 H(+)(in) = a ubiquinol + NAD(+) + 4 H(+)(out). Its function is as follows. Core subunit of the mitochondrial membrane respiratory chain NADH dehydrogenase (Complex I) that is believed to belong to the minimal assembly required for catalysis. Complex I functions in the transfer of electrons from NADH to the respiratory chain. The immediate electron acceptor for the enzyme is believed to be ubiquinone. In Paramecium primaurelia, this protein is NADH-ubiquinone oxidoreductase subunit 9 (NAD9).